A 122-amino-acid polypeptide reads, in one-letter code: MNAVAEAPVTEDVPAPFVFTDSAADKVKQLIEEEGNAELKLRVFVQGGGCSGFQYGFTFDEEVNEDDTTMVKNGVTLLIDSMSYQYLVGAEIDYKEDINGAQFVIKNPNASTTCGCGSSFSV.

Iron-sulfur cluster is bound by residues Cys-50, Cys-114, and Cys-116.

It belongs to the HesB/IscA family. Homodimer. Requires iron-sulfur cluster as cofactor.

Required for insertion of 4Fe-4S clusters. The chain is Putative iron-sulfur cluster insertion protein ErpA from Cupriavidus necator (strain ATCC 17699 / DSM 428 / KCTC 22496 / NCIMB 10442 / H16 / Stanier 337) (Ralstonia eutropha).